Reading from the N-terminus, the 200-residue chain is Glutathione peroxidase 1 (200 aa).

Serine 31 is subject to Phosphoserine. Selenocysteine 46 is a catalytic residue. Position 46 (selenocysteine 46) is a non-standard amino acid, selenocysteine. An N6-acetyllysine; alternate mark is found at lysine 85 and lysine 111. N6-succinyllysine; alternate occurs at positions 85 and 111. Lysine 118 carries the N6-acetyllysine modification. Lysine 145 is subject to N6-acetyllysine; alternate. An N6-succinyllysine; alternate modification is found at lysine 145. Serine 194 is modified (phosphoserine).

This sequence belongs to the glutathione peroxidase family. As to quaternary structure, homotetramer. Interacts with MIEN1. Post-translationally, during periods of oxidative stress, Sec-46 may react with a superoxide radical, irreversibly lose hydroselenide and be converted to dehydroalanine.

Its subcellular location is the cytoplasm. It localises to the mitochondrion. The catalysed reaction is 2 glutathione + H2O2 = glutathione disulfide + 2 H2O. It carries out the reaction a hydroperoxy polyunsaturated fatty acid + 2 glutathione = a hydroxy polyunsaturated fatty acid + glutathione disulfide + H2O. The enzyme catalyses tert-butyl hydroperoxide + 2 glutathione = tert-butanol + glutathione disulfide + H2O. It catalyses the reaction cumene hydroperoxide + 2 glutathione = 2-phenylpropan-2-ol + glutathione disulfide + H2O. The catalysed reaction is (13S)-hydroperoxy-(9Z,11E)-octadecadienoate + 2 glutathione = (13S)-hydroxy-(9Z,11E)-octadecadienoate + glutathione disulfide + H2O. It carries out the reaction (9S)-hydroperoxy-(10E,12Z)-octadecadienoate + 2 glutathione = (9S)-hydroxy-(10E,12Z)-octadecadienoate + glutathione disulfide + H2O. The enzyme catalyses (5S)-hydroperoxy-(6E,8Z,11Z,14Z)-eicosatetraenoate + 2 glutathione = (5S)-hydroxy-(6E,8Z,11Z,14Z)-eicosatetraenoate + glutathione disulfide + H2O. It catalyses the reaction (12S)-hydroperoxy-(5Z,8Z,10E,14Z)-eicosatetraenoate + 2 glutathione = (12S)-hydroxy-(5Z,8Z,10E,14Z)-eicosatetraenoate + glutathione disulfide + H2O. The catalysed reaction is (12R)-hydroperoxy-(5Z,8Z,10E,14Z)-eicosatetraenoate + 2 glutathione = (12R)-hydroxy-(5Z,8Z,10E,14Z)-eicosatetraenoate + glutathione disulfide + H2O. It carries out the reaction (15S)-hydroperoxy-(5Z,8Z,11Z,13E)-eicosatetraenoate + 2 glutathione = (15S)-hydroxy-(5Z,8Z,11Z,13E)-eicosatetraenoate + glutathione disulfide + H2O. The enzyme catalyses (5S)-hydroperoxy-(6E,8Z,11Z,14Z,17Z)-eicosapentaenoate + 2 glutathione = (5S)-hydroxy-(6E,8Z,11Z,14Z,17Z)-eicosapentaenoate + glutathione disulfide + H2O. It catalyses the reaction (12S)-hydroperoxy-(5Z,8Z,10E,14Z,17Z)-eicosapentaenoate + 2 glutathione = (12S)-hydroxy-(5Z,8Z,10E,14Z,17Z)-eicosapentaenoate + glutathione disulfide + H2O. The catalysed reaction is (15S)-hydroperoxy-(5Z,8Z,11Z,13E,17Z)-eicosapentaenoate + 2 glutathione = (15S)-hydroxy-(5Z,8Z,11Z,13E,17Z)-eicosapentaenoate + glutathione disulfide + H2O. It carries out the reaction (15S)-hydroperoxy-(11Z,13E)-eicosadienoate + 2 glutathione = (15S)-hydroxy-(11Z,13E)-eicosadienoate + glutathione disulfide + H2O. The enzyme catalyses (17S)-hydroperoxy-(4Z,7Z,10Z,13Z,15E,19Z)-docosahexaenoate + 2 glutathione = (17S)-hydroxy-(4Z,7Z,10Z,13Z,15E,19Z)-docosahexaenoate + glutathione disulfide + H2O. In terms of biological role, catalyzes the reduction of hydroperoxides in a glutathione-dependent manner thus regulating cellular redox homeostasis. Can reduce small soluble hydroperoxides such as H2O2, cumene hydroperoxide and tert-butyl hydroperoxide, as well as several fatty acid-derived hydroperoxides. In platelets catalyzes the reduction of 12-hydroperoxyeicosatetraenoic acid, the primary product of the arachidonate 12-lipoxygenase pathway. The chain is Glutathione peroxidase 1 (GPX1) from Oryctolagus cuniculus (Rabbit).